The primary structure comprises 246 residues: tRNA (guanine-N(7)-)-methyltransferase (246 aa).

Positions 77, 102, 129, and 152 each coordinate S-adenosyl-L-methionine. Asp152 is a catalytic residue. Substrate is bound by residues Lys156, Asp188, and 225-228; that span reads TKFE.

The protein belongs to the class I-like SAM-binding methyltransferase superfamily. TrmB family.

It catalyses the reaction guanosine(46) in tRNA + S-adenosyl-L-methionine = N(7)-methylguanosine(46) in tRNA + S-adenosyl-L-homocysteine. The protein operates within tRNA modification; N(7)-methylguanine-tRNA biosynthesis. Functionally, catalyzes the formation of N(7)-methylguanine at position 46 (m7G46) in tRNA. The sequence is that of tRNA (guanine-N(7)-)-methyltransferase from Haemophilus influenzae (strain PittEE).